A 120-amino-acid chain; its full sequence is NAD(P)H-quinone oxidoreductase subunit 3 (120 aa).

3 helical membrane-spanning segments follow: residues 10-30, 64-84, and 89-109; these read FLGF…TNLI, MFAL…PWAV, and LGLL…IALA.

This sequence belongs to the complex I subunit 3 family. In terms of assembly, NDH-1 can be composed of about 15 different subunits; different subcomplexes with different compositions have been identified which probably have different functions.

It is found in the cellular thylakoid membrane. The enzyme catalyses a plastoquinone + NADH + (n+1) H(+)(in) = a plastoquinol + NAD(+) + n H(+)(out). It catalyses the reaction a plastoquinone + NADPH + (n+1) H(+)(in) = a plastoquinol + NADP(+) + n H(+)(out). Its function is as follows. NDH-1 shuttles electrons from an unknown electron donor, via FMN and iron-sulfur (Fe-S) centers, to quinones in the respiratory and/or the photosynthetic chain. The immediate electron acceptor for the enzyme in this species is believed to be plastoquinone. Couples the redox reaction to proton translocation, and thus conserves the redox energy in a proton gradient. Cyanobacterial NDH-1 also plays a role in inorganic carbon-concentration. In Prochlorococcus marinus (strain MIT 9515), this protein is NAD(P)H-quinone oxidoreductase subunit 3.